We begin with the raw amino-acid sequence, 356 residues long: UDP-N-acetylglucosamine--N-acetylmuramyl-(pentapeptide) pyrophosphoryl-undecaprenol N-acetylglucosamine transferase (356 aa).

Positions 166, 196, and 290 each coordinate UDP-N-acetyl-alpha-D-glucosamine.

It belongs to the glycosyltransferase 28 family. MurG subfamily.

The protein resides in the cell membrane. The catalysed reaction is Mur2Ac(oyl-L-Ala-gamma-D-Glu-L-Lys-D-Ala-D-Ala)-di-trans,octa-cis-undecaprenyl diphosphate + UDP-N-acetyl-alpha-D-glucosamine = beta-D-GlcNAc-(1-&gt;4)-Mur2Ac(oyl-L-Ala-gamma-D-Glu-L-Lys-D-Ala-D-Ala)-di-trans,octa-cis-undecaprenyl diphosphate + UDP + H(+). Its pathway is cell wall biogenesis; peptidoglycan biosynthesis. Its function is as follows. Cell wall formation. Catalyzes the transfer of a GlcNAc subunit on undecaprenyl-pyrophosphoryl-MurNAc-pentapeptide (lipid intermediate I) to form undecaprenyl-pyrophosphoryl-MurNAc-(pentapeptide)GlcNAc (lipid intermediate II). This is UDP-N-acetylglucosamine--N-acetylmuramyl-(pentapeptide) pyrophosphoryl-undecaprenol N-acetylglucosamine transferase from Staphylococcus aureus (strain Mu3 / ATCC 700698).